The chain runs to 167 residues: Peptide deformylase (167 aa).

2 residues coordinate Fe cation: cysteine 91 and histidine 133. Glutamate 134 is a catalytic residue. Residue histidine 137 participates in Fe cation binding.

This sequence belongs to the polypeptide deformylase family. It depends on Fe(2+) as a cofactor.

The catalysed reaction is N-terminal N-formyl-L-methionyl-[peptide] + H2O = N-terminal L-methionyl-[peptide] + formate. Functionally, removes the formyl group from the N-terminal Met of newly synthesized proteins. Requires at least a dipeptide for an efficient rate of reaction. N-terminal L-methionine is a prerequisite for activity but the enzyme has broad specificity at other positions. The sequence is that of Peptide deformylase from Neisseria gonorrhoeae (strain ATCC 700825 / FA 1090).